The primary structure comprises 96 residues: Co-chaperonin GroES (96 aa).

This sequence belongs to the GroES chaperonin family. As to quaternary structure, heptamer of 7 subunits arranged in a ring. Interacts with the chaperonin GroEL.

It is found in the cytoplasm. Its function is as follows. Together with the chaperonin GroEL, plays an essential role in assisting protein folding. The GroEL-GroES system forms a nano-cage that allows encapsulation of the non-native substrate proteins and provides a physical environment optimized to promote and accelerate protein folding. GroES binds to the apical surface of the GroEL ring, thereby capping the opening of the GroEL channel. The sequence is that of Co-chaperonin GroES from Buchnera aphidicola subsp. Acyrthosiphon pisum (strain 5A).